We begin with the raw amino-acid sequence, 427 residues long: Trigger factor (427 aa).

One can recognise a PPIase FKBP-type domain in the interval 163–248 (GDTVVIDFVG…IHEVKAKEVP (86 aa)).

The protein belongs to the FKBP-type PPIase family. Tig subfamily.

The protein localises to the cytoplasm. The catalysed reaction is [protein]-peptidylproline (omega=180) = [protein]-peptidylproline (omega=0). Its function is as follows. Involved in protein export. Acts as a chaperone by maintaining the newly synthesized protein in an open conformation. Functions as a peptidyl-prolyl cis-trans isomerase. This is Trigger factor from Streptococcus pneumoniae (strain Hungary19A-6).